A 116-amino-acid polypeptide reads, in one-letter code: Large ribosomal subunit protein bL17 (116 aa).

This sequence belongs to the bacterial ribosomal protein bL17 family. In terms of assembly, part of the 50S ribosomal subunit. Contacts protein L32.

This is Large ribosomal subunit protein bL17 from Chloroflexus aggregans (strain MD-66 / DSM 9485).